The chain runs to 591 residues: Inactive metallocarboxypeptidase ECM14 (591 aa).

A signal peptide spans 1–21 (MRLFARLEVLAILACAVPIAA). Positions 22 to 175 (IPSFLSNSYP…QTIYESYPSS (154 aa)) are excised as a propeptide. The 321-residue stretch at 203–523 (DYQPFSVIVT…NAVMVLGRFL (321 aa)) folds into the Peptidase M14 domain. Residues H265 and E268 each contribute to the Zn(2+) site. Substrate is bound by residues 265 to 268 (HARE), R323, and 340 to 341 (DR). Cysteines 334 and 357 form a disulfide. Residues N350 and N381 are each glycosylated (N-linked (GlcNAc...) asparagine). Zn(2+) is bound at residue H397. Residue 398-399 (SY) participates in substrate binding. A compositionally biased stretch (basic and acidic residues) spans 533 to 543 (DWEDESQRPKA). A disordered region spans residues 533–591 (DWEDESQRPKADEDDIPSENELGENDDSWIPFDYRNHDDQNEGEGYDNDEWGFRRRRKG). Composition is skewed to acidic residues over residues 544 to 559 (DEDDIPSENELGENDD) and 573 to 582 (NEGEGYDNDE).

The protein belongs to the peptidase M14 family. Zn(2+) serves as cofactor.

The protein localises to the vacuole. The protein resides in the secreted. Functionally, inactive carboxypeptidase that may play a role in cell wall organization and biogenesis. The chain is Inactive metallocarboxypeptidase ECM14 (ECM14) from Paracoccidioides lutzii (strain ATCC MYA-826 / Pb01) (Paracoccidioides brasiliensis).